Here is an 822-residue protein sequence, read N- to C-terminus: Serine/threonine-protein kinase kin-29 (822 aa).

One can recognise a Protein kinase domain in the interval 16–267 (YDVGRAIGKG…IQNVLQHRWM (252 aa)). ATP contacts are provided by residues 22 to 30 (IGKGNFATV) and K45. The active-site Proton acceptor is the D138. 3 disordered regions span residues 348–367 (EGTG…LSGK), 389–423 (LSSP…RQFG), and 577–602 (NPIP…WASP). The segment covering 394–406 (CDSDDSSNSDLCD) has biased composition (acidic residues).

This sequence belongs to the protein kinase superfamily. CAMK Ser/Thr protein kinase family. SNF1 subfamily. As to quaternary structure, interacts with tax-6. Mg(2+) serves as cofactor. In terms of processing, autophosphorylated. Elevated cAMP levels appears to act via PKA to directly or indirectly phosphorylate multiple sites on kin-29 and inhibit function. Primarily neuronal, with additional expression in body wall muscle and hypodermal cells. Among neuronal cells, expressed in multiple sensory neurons and interneurons in the lateral, anterior, and lumbar ganglia, as well as in motor neurons in the ventral motor cord. Present in the AWB and AWC olfactory neurons.

Its subcellular location is the cytoplasm. The protein resides in the nucleus. It catalyses the reaction L-seryl-[protein] + ATP = O-phospho-L-seryl-[protein] + ADP + H(+). The enzyme catalyses L-threonyl-[protein] + ATP = O-phospho-L-threonyl-[protein] + ADP + H(+). Its function is as follows. Regulates chemoreceptor expression by phosphorylating the hda-4 class II histone deacetylase (HDAC) and inhibiting the gene repression functions of hda-4 and the mef-2 transcription factor, enabling the correct sensing and transduction of food signals. Role in determining body size, the dauer decision and serotonin-mediated egg laying. May modulate the Sma/Mab pathway and regulates development in the later larval stages. This chain is Serine/threonine-protein kinase kin-29, found in Caenorhabditis elegans.